Consider the following 529-residue polypeptide: Heat shock protein 60 (529 aa).

Residues Tyr-460–Pro-484 are disordered.

This Giardia intestinalis (Giardia lamblia) protein is Heat shock protein 60.